A 112-amino-acid chain; its full sequence is Class I hydrophobin 17 (112 aa).

The signal sequence occupies residues Met1 to Ala19. Cystine bridges form between Cys30-Cys90, Cys37-Cys84, Cys38-Cys74, and Cys91-Cys104. Asn108 carries an N-linked (GlcNAc...) asparagine glycan.

The protein belongs to the fungal hydrophobin family. In terms of assembly, self-assembles to form functional amyloid fibrils called rodlets. Self-assembly into fibrillar rodlets occurs spontaneously at hydrophobic:hydrophilic interfaces and the rodlets further associate laterally to form amphipathic monolayers.

Its subcellular location is the secreted. The protein localises to the cell wall. Functionally, aerial growth, conidiation, and dispersal of filamentous fungi in the environment rely upon a capability of their secreting small amphipathic proteins called hydrophobins (HPBs) with low sequence identity. Class I can self-assemble into an outermost layer of rodlet bundles on aerial cell surfaces, conferring cellular hydrophobicity that supports fungal growth, development and dispersal; whereas Class II form highly ordered films at water-air interfaces through intermolecular interactions but contribute nothing to the rodlet structure. Hydph17 is a class I hydrophobin involved in mycelial growth. This Pleurotus ostreatus (strain PC15) (Oyster mushroom) protein is Class I hydrophobin 17.